We begin with the raw amino-acid sequence, 526 residues long: Cytochrome P450 monooxygenase 253 (526 aa).

Helical transmembrane passes span 13–33 (IASS…LLLI), 115–135 (FIMA…GYGK), and 306–326 (IGAG…AMTL). Cysteine 451 contacts heme.

It belongs to the cytochrome P450 family. Heme serves as cofactor.

Its subcellular location is the membrane. Its pathway is secondary metabolite biosynthesis. In terms of biological role, cytochrome P450 monooxygenase that is able to use delta(6)-protoilludene as a substrate to produce delta(6)-protoilludene-8-ol. The polypeptide is Cytochrome P450 monooxygenase 253 (Postia placenta (strain ATCC 44394 / Madison 698-R) (Brown rot fungus)).